The chain runs to 279 residues: Putative expansin-A26 (279 aa).

The first 27 residues, 1–27, serve as a signal peptide directing secretion; the sequence is MKLLEKMIYVEFLMIIMAMWVVPMSYG. An Expansin-like EG45 domain is found at 76–186; it reads QGACGYGNLF…RRIPCSKTGG (111 aa). Residues 196 to 275 enclose the Expansin-like CBD domain; sequence YFLMVLIYNV…NWGFGQTFDG (80 aa).

Belongs to the expansin family. Expansin A subfamily.

Its subcellular location is the secreted. The protein localises to the cell wall. It localises to the membrane. Causes loosening and extension of plant cell walls by disrupting non-covalent bonding between cellulose microfibrils and matrix glucans. No enzymatic activity has been found. The protein is Putative expansin-A26 (EXPA26) of Arabidopsis thaliana (Mouse-ear cress).